A 475-amino-acid polypeptide reads, in one-letter code: Solute carrier family 46 member 2 (475 aa).

At 1–23 the chain is on the cytoplasmic side; sequence MSPEVTCPRRGHLPRFHPRTWVE. The chain crosses the membrane as a helical span at residues 24–44; the sequence is PVVASSQVAASLYDAGLLLVV. Over 45 to 78 the chain is Extracellular; it reads KASYGTGGSSNHSASPSPRGALEDQQQRAISNFY. Residue N55 is glycosylated (N-linked (GlcNAc...) asparagine). The chain crosses the membrane as a helical span at residues 79–99; the sequence is IIYNLVVGLSPLLSAYGLGWL. Topologically, residues 100 to 108 are cytoplasmic; sequence SDRYHRKIS. The helical transmembrane segment at 109–129 threads the bilayer; that stretch reads ICMSLLGFLLSRLGLLLKVLL. Residues 130-138 lie on the Extracellular side of the membrane; sequence DWPVEVLYG. Residues 139–159 form a helical membrane-spanning segment; that stretch reads AAALNGLFGGFSAFWSGVMAL. The Cytoplasmic segment spans residues 160-172; that stretch reads GSLGSSEGRRSVR. A helical transmembrane segment spans residues 173–193; the sequence is LILIDLMLGLAGFCGSMASGH. Topologically, residues 194–205 are extracellular; that stretch reads LFKQMAGHSGQG. A helical membrane pass occupies residues 206 to 226; that stretch reads LILTACSVSCASFALLYSLLV. The Cytoplasmic segment spans residues 227–282; sequence LKVPESVAKPSQELPAVDTVSGTVGTYRTLDPDQLDQQYAVGHPPSPGKAKPHKTT. The helical transmembrane segment at 283–303 threads the bilayer; sequence IALLFVGAIIYDLAVVGTVDV. The Extracellular portion of the chain corresponds to 304–320; sequence IPLFVLREPLGWNQVQV. The helical transmembrane segment at 321–341 threads the bilayer; the sequence is GYGMAAGYTIFITSFLGVLVF. Topologically, residues 342–347 are cytoplasmic; that stretch reads SRCFRD. The chain crosses the membrane as a helical span at residues 348–368; sequence TTMIMIGMVSFGSGALLLAFV. Residues 369–370 lie on the Extracellular side of the membrane; the sequence is KE. The chain crosses the membrane as a helical span at residues 371-391; it reads TYMFYIARAVMLFALIPVTTI. The Cytoplasmic segment spans residues 392 to 406; sequence RSAMSKLIKGSSYGK. A helical membrane pass occupies residues 407–427; that stretch reads VFVILQLSLALTGVVTSTLYN. Residues 428-435 lie on the Extracellular side of the membrane; it reads KIYQLTMD. The chain crosses the membrane as a helical span at residues 436-456; that stretch reads MFVGSCFALSSFLSFLAIIPI. The Cytoplasmic segment spans residues 457–475; that stretch reads SIVAYKQVPLSPYGDIIEK.

It belongs to the major facilitator superfamily. SLC46A family. Glycosylated. Strongly expressed in the adult thymus. Expressed in spleen, lymph nodes, thymus, PBL, bone marrow and fetal liver. Expressed in monocytes and pre-dendridic cells.

It localises to the endosome membrane. The protein resides in the cell membrane. It catalyses the reaction N-acetyl-beta-D-glucosaminyl-(1-&gt;4)-1,6-anhydro-N-acetyl-beta-D-muramoyl-L-alanyl-gamma-D-glutamyl-meso-2,6-diaminopimeloyl-D-alanine(out) + n H(+)(out) = N-acetyl-beta-D-glucosaminyl-(1-&gt;4)-1,6-anhydro-N-acetyl-beta-D-muramoyl-L-alanyl-gamma-D-glutamyl-meso-2,6-diaminopimeloyl-D-alanine(in) + n H(+)(in). The catalysed reaction is L-alanyl-gamma-D-glutamyl-meso-2,6-diaminopimelate(out) + n H(+)(out) = L-alanyl-gamma-D-glutamyl-meso-2,6-diaminopimelate(in) + n H(+)(in). It carries out the reaction N-acetyl-D-muramoyl-L-alanyl-D-isoglutamine(out) + n H(+)(out) = N-acetyl-D-muramoyl-L-alanyl-D-isoglutamine(in) + n H(+)(in). The enzyme catalyses 2',3'-cGAMP(out) + n H(+)(out) = 2',3'-cGAMP(in) + n H(+)(in). It catalyses the reaction 3',3'-cGAMP(out) + n H(+)(out) = 3',3'-cGAMP(in) + n H(+)(in). Proton-coupled transporter that delivers pathogen-associated or danger-associated molecular patterns to cytosolic pattern recognition receptors as part of the innate immune response to microbes or tissue injury. Has selectivity toward muropeptides that contain the amino acid diaminopimelic acid (DAP-type peptidoglycan muropeptides) including Tri-DAP and tracheal toxin (TCT), common in Gram-negative bacteria and Gram-positive bacilli. In the context of immune recognition of skin microbiota, shuttles bacterial muropeptides across the endolysosomal membranes into the cytosol for recognition by NOD1, triggering MYD88-dependent secretion of IL1A and neutrophil recruitment in a pyroptosis-type inflammatory process. To a lesser extent and redundantly, transports muramyl dipeptides derived from most bacterial proteoglycans, eliciting NOD2 receptor activation and downstream inflammatory responses. Postulated to function as a dominant importer of cyclic GMP-AMP dinucleotides (cGAMPs) in monocyte and macrophage cell lineages. Selectively imports cGAMPs derived from pathogenic bacteria such as 3'3'-cGAMP thus providing for differential immune recognition of pathogenic versus commensal bacteria. During tumorigenesis may transport extracellular tumor-derived 2'3'-cGAMP across the plasma membrane of M1-polarized macrophages to activate the anti-tumoral stimulator of interferon genes (STING) pathway. The transport mechanism, its electrogenicity and stoichiometry remain to be elucidated. The polypeptide is Solute carrier family 46 member 2 (Homo sapiens (Human)).